The chain runs to 158 residues: Endoribonuclease YbeY (158 aa).

Zn(2+) contacts are provided by His119, His123, and His129.

This sequence belongs to the endoribonuclease YbeY family. Requires Zn(2+) as cofactor.

Its subcellular location is the cytoplasm. Single strand-specific metallo-endoribonuclease involved in late-stage 70S ribosome quality control and in maturation of the 3' terminus of the 16S rRNA. This chain is Endoribonuclease YbeY, found in Acinetobacter baumannii (strain AB307-0294).